An 85-amino-acid polypeptide reads, in one-letter code: uncharacterized protein (85 aa).

2 consecutive transmembrane segments (helical) span residues 13 to 35 (KWLAVAICLAMVGMAVMPAFQPL) and 59 to 81 (EGIVITATLAAAAATAELVHLLL).

The protein resides in the cell membrane. This is an uncharacterized protein from Archaeoglobus fulgidus (strain ATCC 49558 / DSM 4304 / JCM 9628 / NBRC 100126 / VC-16).